A 346-amino-acid polypeptide reads, in one-letter code: UDP-N-acetylenolpyruvoylglucosamine reductase (346 aa).

The FAD-binding PCMH-type domain occupies 17 to 187 (IESQAYALIE…VAVGFTLKKE (171 aa)). Arginine 163 is an active-site residue. The active-site Proton donor is serine 233. The active site involves glutamate 329.

Belongs to the MurB family. FAD is required as a cofactor.

The protein localises to the cytoplasm. The catalysed reaction is UDP-N-acetyl-alpha-D-muramate + NADP(+) = UDP-N-acetyl-3-O-(1-carboxyvinyl)-alpha-D-glucosamine + NADPH + H(+). Its pathway is cell wall biogenesis; peptidoglycan biosynthesis. In terms of biological role, cell wall formation. The protein is UDP-N-acetylenolpyruvoylglucosamine reductase of Photobacterium profundum (strain SS9).